Consider the following 292-residue polypeptide: MADITAAMVKELRERTAAGMMDCKKALTEANGDIELAIENMRKSGQAKAAKKAGRIAAEGIIIARSAGNVAVMLELNCETDFVAKDASFRALGEKVAEIALADKIADLEVLKNTDFGNGESVQVTLNNLIAKIGENMNLRRIVIAEGDNLATYIHGSRIGVITKLVGGDADLAKDLAMHVAANSPQFVKPEDVSAEVVAKEREIQVDIAINSGKPKEIAEKMVEGRMKKFTGDISLTGQPFVKDPSVIVADLLKQKGADVQDFIRFEVGEGIEKQETDFAAEVQAQIAAMKG.

The tract at residues 80–83 (TDFV) is involved in Mg(2+) ion dislocation from EF-Tu.

This sequence belongs to the EF-Ts family.

The protein localises to the cytoplasm. In terms of biological role, associates with the EF-Tu.GDP complex and induces the exchange of GDP to GTP. It remains bound to the aminoacyl-tRNA.EF-Tu.GTP complex up to the GTP hydrolysis stage on the ribosome. This is Elongation factor Ts from Tolumonas auensis (strain DSM 9187 / NBRC 110442 / TA 4).